Reading from the N-terminus, the 328-residue chain is Delta-aminolevulinic acid dehydratase (328 aa).

The Schiff-base intermediate with substrate role is filled by Lys200. 2 residues coordinate 5-aminolevulinate: Arg210 and Lys222. Glu238 contributes to the Mg(2+) binding site. Catalysis depends on Lys253, which acts as the Schiff-base intermediate with substrate. Ser279 and Tyr318 together coordinate 5-aminolevulinate.

This sequence belongs to the ALAD family. As to quaternary structure, homooctamer.

The enzyme catalyses 2 5-aminolevulinate = porphobilinogen + 2 H2O + H(+). It participates in porphyrin-containing compound metabolism; protoporphyrin-IX biosynthesis; coproporphyrinogen-III from 5-aminolevulinate: step 1/4. Stimulated by magnesium, inhibited by zinc. Catalyzes an early step in the biosynthesis of tetrapyrroles. Binds two molecules of 5-aminolevulinate per subunit, each at a distinct site, and catalyzes their condensation to form porphobilinogen. In Chlorobaculum tepidum (strain ATCC 49652 / DSM 12025 / NBRC 103806 / TLS) (Chlorobium tepidum), this protein is Delta-aminolevulinic acid dehydratase (hemB).